The sequence spans 245 residues: tRNA (guanine-N(1)-)-methyltransferase (245 aa).

S-adenosyl-L-methionine is bound by residues Gly-111 and 131–136 (MGDYVL).

This sequence belongs to the RNA methyltransferase TrmD family. Homodimer.

It is found in the cytoplasm. It catalyses the reaction guanosine(37) in tRNA + S-adenosyl-L-methionine = N(1)-methylguanosine(37) in tRNA + S-adenosyl-L-homocysteine + H(+). Specifically methylates guanosine-37 in various tRNAs. This chain is tRNA (guanine-N(1)-)-methyltransferase, found in Staphylococcus aureus (strain MRSA252).